The chain runs to 1331 residues: Alpha,alpha-trehalose-phosphate synthase [UDP-forming] 1 (1331 aa).

Residues 1–13 are compositionally biased toward polar residues; it reads MTDTATGVHSNAN. Disordered regions lie at residues 1-50, 71-118, and 1312-1331; these read MTDT…DNDP, TGKE…SGQL, and PMDQ…SFGN. Residues 39–50 show a composition bias toward basic and acidic residues; it reads DPFDRPKNDNDP. Positions 77–98 are enriched in acidic residues; that stretch reads LDESDDMTENEDHDEMANEDDG. Positions 102 to 112 are enriched in basic and acidic residues; the sequence is NEKKVETRKMD. Residues 1318 to 1331 are compositionally biased toward polar residues; sequence SSTLGASLGTSFGN.

In the N-terminal section; belongs to the glycosyltransferase 20 family. The protein in the C-terminal section; belongs to the gob-1 trehalose phosphatase family.

It catalyses the reaction D-glucose 6-phosphate + UDP-alpha-D-glucose = alpha,alpha-trehalose 6-phosphate + UDP + H(+). Its function is as follows. Catalyzes the production of trehalose from glucose-6-phosphate and UDP-alpha-D-glucose in a 2 step process. This Caenorhabditis elegans protein is Alpha,alpha-trehalose-phosphate synthase [UDP-forming] 1 (tps-1).